We begin with the raw amino-acid sequence, 262 residues long: Enoyl-[acyl-carrier-protein] reductase [NADH] FabI (262 aa).

NAD(+)-binding positions include G13, 19–20 (SI), Q40, 64–65 (DV), and I92. Substrate is bound at residue A95. Residues Y146 and Y156 each act as proton acceptor in the active site. Residues K163 and 192 to 196 (IRTLA) contribute to the NAD(+) site.

The protein belongs to the short-chain dehydrogenases/reductases (SDR) family. FabI subfamily. In terms of assembly, homotetramer.

It catalyses the reaction a 2,3-saturated acyl-[ACP] + NAD(+) = a (2E)-enoyl-[ACP] + NADH + H(+). It carries out the reaction (2E)-butenoyl-[ACP] + NADH + H(+) = butanoyl-[ACP] + NAD(+). The catalysed reaction is (2E)-decenoyl-[ACP] + NADH + H(+) = decanoyl-[ACP] + NAD(+). The enzyme catalyses (2E)-hexadecenoyl-[ACP] + NADH + H(+) = hexadecanoyl-[ACP] + NAD(+). It catalyses the reaction (2E,9Z)-hexadecadienoyl-[ACP] + NADH + H(+) = (9Z)-hexadecenoyl-[ACP] + NAD(+). It carries out the reaction (2E)-5-methylhexenoyl-[ACP] + NADH + H(+) = 5-methylhexanoyl-[ACP] + NAD(+). The protein operates within lipid metabolism; fatty acid biosynthesis. It functions in the pathway cofactor biosynthesis; biotin biosynthesis. Its activity is regulated as follows. Inhibited by diazaborines, triclosan (5-chloro-2-2,4-dichlorophenoxyphenol), 1,4-disubstituted imidazoles, 1,4-benzodiazepine derivatives, naphthyridinone derivatives, luteolin and curcumin. The antibiotic diazaborine interferes with the activity by binding to the protein and NAD. Functionally, catalyzes the reduction of a carbon-carbon double bond in an enoyl moiety that is covalently linked to an acyl carrier protein (ACP). Involved in the elongation cycle of fatty acid which are used in the lipid metabolism and in the biotin biosynthesis. In Escherichia coli (strain K12), this protein is Enoyl-[acyl-carrier-protein] reductase [NADH] FabI (fabI).